The sequence spans 459 residues: Putrescine aminotransferase (459 aa).

Residues 150–151 and Gln-274 each bind pyridoxal 5'-phosphate; that span reads GT. Lys-300 carries the post-translational modification N6-(pyridoxal phosphate)lysine. Position 332 (Thr-332) interacts with pyridoxal 5'-phosphate.

The protein belongs to the class-III pyridoxal-phosphate-dependent aminotransferase family. Putrescine aminotransferase subfamily. It depends on pyridoxal 5'-phosphate as a cofactor.

It carries out the reaction an alkane-alpha,omega-diamine + 2-oxoglutarate = an omega-aminoaldehyde + L-glutamate. The catalysed reaction is putrescine + 2-oxoglutarate = 1-pyrroline + L-glutamate + H2O. It catalyses the reaction cadaverine + 2-oxoglutarate = 5-aminopentanal + L-glutamate. It participates in amine and polyamine degradation; putrescine degradation; 4-aminobutanal from putrescine (transaminase route): step 1/1. In terms of biological role, catalyzes the aminotransferase reaction from putrescine to 2-oxoglutarate, leading to glutamate and 4-aminobutanal, which spontaneously cyclizes to form 1-pyrroline. This is the first step in one of two pathways for putrescine degradation, where putrescine is converted into 4-aminobutanoate (gamma-aminobutyrate or GABA) via 4-aminobutanal. Also functions as a cadaverine transaminase in a a L-lysine degradation pathway to succinate that proceeds via cadaverine, glutarate and L-2-hydroxyglutarate. The protein is Putrescine aminotransferase of Escherichia coli O81 (strain ED1a).